The primary structure comprises 558 residues: Serine/threonine-protein phosphatase 2B catalytic subunit (558 aa).

3 residues coordinate Fe cation: Asp-128, His-130, and Asp-156. Residues Asp-156 and Asn-188 each contribute to the Zn(2+) site. Catalysis depends on His-189, which acts as the Proton donor. His-237 and His-319 together coordinate Zn(2+). Disordered regions lie at residues 415–439 (LRED…NQDP) and 534–558 (ALER…LSTS). The segment covering 420-435 (ATTSPGSASPALPSAA) has biased composition (low complexity). Residues 534–548 (ALERATREADNDKKL) show a composition bias toward basic and acidic residues. Residues 549-558 (QTLSRRLSTS) are compositionally biased toward polar residues.

Belongs to the PPP phosphatase family. PP-2B subfamily. In terms of assembly, composed of two components (A and B), the A component is the catalytic subunit and the B component confers calcium sensitivity. Requires Fe(3+) as cofactor. The cofactor is Zn(2+).

It carries out the reaction O-phospho-L-seryl-[protein] + H2O = L-seryl-[protein] + phosphate. The enzyme catalyses O-phospho-L-threonyl-[protein] + H2O = L-threonyl-[protein] + phosphate. Its function is as follows. Calcium-dependent, calmodulin-stimulated protein phosphatase. This subunit may have a role in the calmodulin activation of calcineurin. This is Serine/threonine-protein phosphatase 2B catalytic subunit (cna-1) from Neurospora crassa (strain ATCC 24698 / 74-OR23-1A / CBS 708.71 / DSM 1257 / FGSC 987).